The sequence spans 85 residues: Putative membrane protein insertion efficiency factor (85 aa).

This sequence belongs to the UPF0161 family.

It is found in the cell membrane. Functionally, could be involved in insertion of integral membrane proteins into the membrane. The protein is Putative membrane protein insertion efficiency factor of Buchnera aphidicola subsp. Baizongia pistaciae (strain Bp).